The primary structure comprises 354 residues: MNEAIIQLDHIDITFRQKKRVIEAVKDVTVHINQGDIYGIVGYSGAGKSTLVRVINLLQAPTNGKITVDGDVTFDQGKIQLSADALRQKRRDIGMIFQHFNLMAQKTAKENVAFALRHSSLSKTEKEHKVIELLELVGLSERADNYPAQLSGGQKQRVAIARALANDPKILISDEATSALDPKTTKQILALLQELNRKLGLTIVMITHEMQIVKDICNRVAVMQNGVLIEEGSVLDIFSNPKEALTQEFITTATGIDEALEKINQQDIVKHLPANALLAQLKYAGTSTDEPLLNSIYRQFEVTANILYGNIEILDHIPVGDMIVVLEGQAENILAAEKALHEAGVDVSILKRGA.

An ABC transporter domain is found at L8–I250. G42–S49 lines the ATP pocket.

The protein belongs to the ABC transporter superfamily. Methionine importer (TC 3.A.1.24) family. In terms of assembly, the complex is composed of two ATP-binding proteins (MetN), two transmembrane proteins (MetI) and a solute-binding protein (MetQ).

Its subcellular location is the cell membrane. The enzyme catalyses L-methionine(out) + ATP + H2O = L-methionine(in) + ADP + phosphate + H(+). It catalyses the reaction D-methionine(out) + ATP + H2O = D-methionine(in) + ADP + phosphate + H(+). Its function is as follows. Part of the ABC transporter complex MetNIQ involved in methionine import. Responsible for energy coupling to the transport system. The chain is Methionine import ATP-binding protein MetN from Streptococcus pyogenes serotype M1.